The primary structure comprises 390 residues: Cystathionine beta-lyase MetC (390 aa).

Lys200 is subject to N6-(pyridoxal phosphate)lysine.

It belongs to the trans-sulfuration enzymes family. As to quaternary structure, homotetramer. Pyridoxal 5'-phosphate is required as a cofactor.

It localises to the cytoplasm. The catalysed reaction is L,L-cystathionine + H2O = L-homocysteine + pyruvate + NH4(+). It carries out the reaction an S-substituted L-cysteine + H2O = a thiol + pyruvate + NH4(+). Its pathway is amino-acid biosynthesis; L-methionine biosynthesis via de novo pathway; L-homocysteine from L-cystathionine: step 1/1. Its function is as follows. Catalyzes the transformation of cystathionine into homocysteine. Also exhibits cysteine desulfhydrase activity in vitro, producing sulfide from cysteine. In Bacillus subtilis (strain 168), this protein is Cystathionine beta-lyase MetC (metC).